We begin with the raw amino-acid sequence, 354 residues long: MALITLRQLLDHAAEQGYGVPAFNINNMEQGLAIMEAARACDAPVIIQASRGARSYANDIMLAKMIEALAAIYPEIPLCMHQDHGNNEATCMTAIRHGFTSVMMDGSLKADAKTPADYDYNVDITARVSHMAHWVGASVEGELGVLGSLETGESEAEDGHGAEGKLDHSQLLTDPDQAVDFVKKTQVDALAIACGTSHGAYKFSRKPDGEILAMSVIEAIHKKLPDTHLVMHGSSSVPQELQDIINAFGGAMPQTFGVPVEEIVRGIKMGVRKVNIDTDCRMAMTGQFRRIAQQTPSEFDPRKFLKPAMDAMRDLCKQRLEAFGTAGQAGKIRIIPMDDMAKRYASGALAPKTA.

Ser-50 contributes to the D-glyceraldehyde 3-phosphate binding site. Asp-83 functions as the Proton donor in the catalytic mechanism. His-84, Asp-105, Glu-142, and His-198 together coordinate Zn(2+). Gly-199 is a dihydroxyacetone phosphate binding site. His-232 serves as a coordination point for Zn(2+). Residues 233–235 (GSS) and 275–278 (NIDT) each bind dihydroxyacetone phosphate.

Belongs to the class II fructose-bisphosphate aldolase family. Homodimer. Zn(2+) is required as a cofactor.

It catalyses the reaction beta-D-fructose 1,6-bisphosphate = D-glyceraldehyde 3-phosphate + dihydroxyacetone phosphate. It functions in the pathway carbohydrate biosynthesis; Calvin cycle. Its pathway is carbohydrate degradation; glycolysis; D-glyceraldehyde 3-phosphate and glycerone phosphate from D-glucose: step 4/4. Functionally, catalyzes the aldol condensation of dihydroxyacetone phosphate (DHAP or glycerone-phosphate) with glyceraldehyde 3-phosphate (G3P) to form fructose 1,6-bisphosphate (FBP) in gluconeogenesis and the reverse reaction in glycolysis. This chain is Fructose-bisphosphate aldolase 2 (cfxB), found in Cereibacter sphaeroides (Rhodobacter sphaeroides).